Consider the following 155-residue polypeptide: Protein-export protein SecB (155 aa).

The protein belongs to the SecB family. As to quaternary structure, homotetramer, a dimer of dimers. One homotetramer interacts with 1 SecA dimer.

It is found in the cytoplasm. Its function is as follows. One of the proteins required for the normal export of preproteins out of the cell cytoplasm. It is a molecular chaperone that binds to a subset of precursor proteins, maintaining them in a translocation-competent state. It also specifically binds to its receptor SecA. This Enterobacter sp. (strain 638) protein is Protein-export protein SecB.